Reading from the N-terminus, the 280-residue chain is Nitrogenase iron protein (280 aa).

9 to 16 (GKGGIGKS) is a binding site for ATP. A [4Fe-4S] cluster-binding site is contributed by Cys-97. Arg-100 is subject to ADP-ribosylarginine; by dinitrogenase reductase ADP-ribosyltransferase. Cys-132 lines the [4Fe-4S] cluster pocket.

The protein belongs to the NifH/BchL/ChlL family. Homodimer. Requires [4Fe-4S] cluster as cofactor. The reversible ADP-ribosylation of Arg-100 inactivates the nitrogenase reductase and regulates nitrogenase activity.

The enzyme catalyses N2 + 8 reduced [2Fe-2S]-[ferredoxin] + 16 ATP + 16 H2O = H2 + 8 oxidized [2Fe-2S]-[ferredoxin] + 2 NH4(+) + 16 ADP + 16 phosphate + 6 H(+). The key enzymatic reactions in nitrogen fixation are catalyzed by the nitrogenase complex, which has 2 components: the iron protein and the molybdenum-iron protein. This chain is Nitrogenase iron protein, found in Desulforudis audaxviator (strain MP104C).